The chain runs to 220 residues: Germin-like protein subfamily 2 member 4 (220 aa).

The signal sequence occupies residues 1-21 (MDSRCFGFFFTLLSLNVIVLA). Cysteines 31 and 46 form a disulfide. N-linked (GlcNAc...) asparagine glycans are attached at residues N51 and N69. The 152-residue stretch at 58–209 (FFAGIGKPAV…TFQIGTKEIE (152 aa)) folds into the Cupin type-1 domain. Residues H108, H110, E115, and H154 each contribute to the Mn(2+) site.

The protein belongs to the germin family. As to quaternary structure, oligomer (believed to be a pentamer but probably hexamer).

The protein resides in the secreted. It is found in the extracellular space. It localises to the apoplast. May play a role in plant defense. Probably has no oxalate oxidase activity even if the active site is conserved. The polypeptide is Germin-like protein subfamily 2 member 4 (GLP10) (Arabidopsis thaliana (Mouse-ear cress)).